The chain runs to 129 residues: uncharacterized protein (129 aa).

This is an uncharacterized protein from Bacillus subtilis (strain 168).